The primary structure comprises 217 residues: Non-structural protein NS3 (217 aa).

The protein belongs to the orbivirus NS3 family.

May play a role in the release of virions from infected cells. The chain is Non-structural protein NS3 (Segment-10) from African horse sickness virus (AHSV).